The chain runs to 248 residues: Putative imidazole glycerol phosphate synthase subunit hisF2 (248 aa).

Residue Asp-129 is part of the active site.

This sequence belongs to the HisA/HisF family. Heterodimer of HisH and HisF.

Its subcellular location is the cytoplasm. It carries out the reaction 5-[(5-phospho-1-deoxy-D-ribulos-1-ylimino)methylamino]-1-(5-phospho-beta-D-ribosyl)imidazole-4-carboxamide + L-glutamine = D-erythro-1-(imidazol-4-yl)glycerol 3-phosphate + 5-amino-1-(5-phospho-beta-D-ribosyl)imidazole-4-carboxamide + L-glutamate + H(+). It functions in the pathway amino-acid biosynthesis; L-histidine biosynthesis; L-histidine from 5-phospho-alpha-D-ribose 1-diphosphate: step 5/9. Its function is as follows. IGPS catalyzes the conversion of PRFAR and glutamine to IGP, AICAR and glutamate. The HisF subunit catalyzes the cyclization activity that produces IGP and AICAR from PRFAR using the ammonia provided by the HisH subunit. This Campylobacter jejuni subsp. jejuni serotype O:2 (strain ATCC 700819 / NCTC 11168) protein is Putative imidazole glycerol phosphate synthase subunit hisF2 (hisF2).